The chain runs to 410 residues: MFRLRDFEYYNRTVFLRVDLNSPMSNGKIISDARFRAVLPTIKYLIESGAKVVVGTHQGKPYSEEYSTTEEHARILSELLNMHVEYVEDIFGKYARERIKAMKPGEVIVLENLRFSAEEVKNATIEECEKTFFVRKLSQVIDLVVNDAFAAAHRSQPSLVGFARIKPMIMGFLMEKEVDALTKAYESEEKPRVYVLGGAKVDDSLKVAENVLRKEKADLILTGGLVGQLFTLAKGFDLGRENIKFLEKKGILKYVDWAEKILDEFYPYVRTPVDFAIDFKGERVEIDLLSDEKRLFDEYPILDIGSRTVEKYREILLKARIIVANGPMGVFEREEFAVGTIGVFKAIGESPAFSVIGGGHSIASIYKYNITGISHISTGGGAMLTFFAGEKLPVLEALKISYEKFSNLLS.

Substrate-binding positions include 19–21 (DLN), R34, 57–60 (HQGK), R114, and R154. ATP is bound by residues E332 and 358-361 (GGHS).

Belongs to the phosphoglycerate kinase family. In terms of assembly, homodimer.

Its subcellular location is the cytoplasm. The enzyme catalyses (2R)-3-phosphoglycerate + ATP = (2R)-3-phospho-glyceroyl phosphate + ADP. It functions in the pathway carbohydrate degradation; glycolysis; pyruvate from D-glyceraldehyde 3-phosphate: step 2/5. The sequence is that of Phosphoglycerate kinase (pgk) from Pyrococcus furiosus (strain ATCC 43587 / DSM 3638 / JCM 8422 / Vc1).